We begin with the raw amino-acid sequence, 78 residues long: Sperm-specific protein Phi-0 (78 aa).

3 stretches are compositionally biased toward basic residues: residues 1-21 (MVAR…RSAA), 31-57 (AASR…KPKA), and 64-78 (VRRR…SVSK). Residues 1-78 (MVARRQTKKA…RRIRRASVSK (78 aa)) are disordered.

The protein resides in the nucleus. It is found in the chromosome. In terms of biological role, involved in nuclear basic protein transition: histones are replaced by spermatid specific proteins which are themselves replaced by protamines in late spermatids. This chain is Sperm-specific protein Phi-0, found in Holothuria tubulosa (Tubular sea cucumber).